We begin with the raw amino-acid sequence, 152 residues long: Transcriptional regulator MraZ (152 aa).

SpoVT-AbrB domains are found at residues 5–52 and 81–124; these read ATMV…PLPE and ASEC…DEQT.

It belongs to the MraZ family. In terms of assembly, forms oligomers.

It localises to the cytoplasm. The protein localises to the nucleoid. Functionally, negatively regulates its own expression and that of the subsequent genes in the proximal part of the division and cell wall (dcw) gene cluster. Acts by binding directly to DNA. May also regulate the expression of genes outside the dcw cluster. The chain is Transcriptional regulator MraZ from Yersinia pestis bv. Antiqua (strain Antiqua).